A 1058-amino-acid polypeptide reads, in one-letter code: COP1-interacting protein 7 (1058 aa).

3 disordered regions span residues 123 to 147 (LGGT…GDTV), 262 to 281 (HGNS…QEGR), and 330 to 463 (MGDV…GNDN). 2 stretches are compositionally biased toward polar residues: residues 126–136 (TWTSQKSTALS) and 262–276 (HGNS…SFET). The short motif at 340-347 (SKKKKKKK) is the Nuclear localization signal 1 element. Residues 340 to 353 (SKKKKKKKKNKKKS) are compositionally biased toward basic residues. The span at 403–414 (DSDESGEEEGFV) shows a compositional bias: acidic residues. Residues 431 to 438 (ERRHKSTS) carry the Nuclear localization signal 2 motif. Over residues 432 to 446 (RRHKSTSHRQRKHKS) the composition is skewed to basic residues. A compositionally biased stretch (basic and acidic residues) spans 447–462 (HNGDDDSSNKETKGND). S477 carries the post-translational modification Phosphoserine. Positions 708 to 887 (AGEQTLDGKE…KSVELSRDPS (180 aa)) are disordered. Residues 757 to 773 (SKSEMEEERKKRMEELL) are compositionally biased toward basic and acidic residues. Positions 764-771 (ERKKRMEE) match the Nuclear localization signal 3 motif. Over residues 783–808 (KSSGGSVSSSLASKKTPTVTKSVKSS) the composition is skewed to low complexity. 2 stretches are compositionally biased toward basic and acidic residues: residues 860 to 869 (KTEKAQEKKS) and 878 to 887 (KSVELSRDPS). Residues S915, S986, and S992 each carry the phosphoserine modification. The interval 1020-1041 (STPPATEADHSRKKWNSEETSP) is disordered. A compositionally biased stretch (basic and acidic residues) spans 1026-1040 (EADHSRKKWNSEETS).

Interacts with COP1.

The protein localises to the nucleus. In terms of biological role, exhibits transcriptional activation activity. Positive regulator of light-regulated genes, probably being a direct downstream target of COP1 for mediating light control of gene expression. The sequence is that of COP1-interacting protein 7 from Arabidopsis thaliana (Mouse-ear cress).